The chain runs to 575 residues: MNYFPDEVIEHVFDFVTSHKDRNAISLVCKSWYKIERYSRQKVFIGNCYAINPERLLRRFPCLKSLTLKGKPHFADFNLVPHEWGGFVLPWIEALARSRVGLEELRLKRMVVTDESLELLSRSFVNFKSLVLVSCEGFTTDGLASIAANCRHLRDLDLQENEIDDHRGQWLSCFPDTCTTLVTLNFACLEGETNLVALERLVARSPNLKSLKLNRAVPLDALARLMACAPQIVDLGVGSYENDPDSESYLKLMAVIKKCTSLRSLSGFLEAAPHCLSAFHPICHNLTSLNLSYAAEIHGSHLIKLIQHCKKLQRLWILDSIGDKGLEVVASTCKELQELRVFPSDLLGGGNTAVTEEGLVAISAGCPKLHSILYFCQQMTNAALVTVAKNCPNFIRFRLCILEPNKPDHVTSQPLDEGFGAIVKACKSLRRLSLSGLLTDQVFLYIGMYANQLEMLSIAFAGDTDKGMLYVLNGCKKMKKLEIRDSPFGDTALLADVSKYETMRSLWMSSCEVTLSGCKRLAEKAPWLNVEIINENDNNRMEENGHEGRQKVDKLYLYRTVVGTRMDAPPFVWIL.

Residues 1–47 enclose the F-box domain; that stretch reads MNYFPDEVIEHVFDFVTSHKDRNAISLVCKSWYKIERYSRQKVFIGN. Residue Lys69 participates in 1D-myo-inositol hexakisphosphate binding. Residues 76 to 77 form an interaction with auxin-responsive proteins region; sequence DF. 1D-myo-inositol hexakisphosphate-binding positions include 108 to 109 and Arg340; that span reads KR. The tract at residues 343-348 is interaction with auxin-responsive proteins; sequence PSDLLG. 396-398 contributes to the 1D-myo-inositol hexakisphosphate binding site; it reads RFR. An interaction with auxin-responsive proteins region spans residues 400 to 404; it reads CILEP. Position 431 (Arg431) interacts with 1D-myo-inositol hexakisphosphate. Positions 459 to 460 are interaction with auxin-responsive proteins; sequence AF. 1D-myo-inositol hexakisphosphate is bound by residues 479–480 and Arg504; that span reads KK.

Part of a SCF (SKP1-cullin-F-box) protein ligase complex. Interacts with Aux/IAA proteins (IAA7) in an auxin-dependent manner. In terms of tissue distribution, ubiquitous, with higher levels in seedlings.

It localises to the nucleus. Its pathway is protein modification; protein ubiquitination. Component of SCF(ASK-cullin-F-box) E3 ubiquitin ligase complexes, which may mediate the ubiquitination and subsequent proteasomal degradation of target proteins. Confers sensitivity to the virulent bacterial pathogen P.syringae. Auxin receptor that mediates Aux/IAA proteins proteasomal degradation and auxin-regulated transcription. Involved in embryogenesis regulation by auxin. In Arabidopsis thaliana (Mouse-ear cress), this protein is Protein AUXIN SIGNALING F-BOX 2 (AFB2).